Consider the following 379-residue polypeptide: MKHLAIFGSTGSVGQQALAIIRSLPHLFNVVALASYGNKRDLFFEQIREFSPSIVSVYDEQLYFEIRKEFPKVQAFLCEEGLLAAATANEIDTIVAASSGIVALPAIIAAMRSGKTLALANKEVLVSAGELINGLAQQYQTKILPIDSEHNALYQCLEGRDTSEVRKLFLTASGGPLLYKSKEELTRVTIQDVLKHPIWNMGAKITVDSSTLVNKGLEIIEAYWLFGLEHAEIDAVIHPQSLIHGMVEFEDGTVLSVMNPPSMLFPIQHVLTTPKRCPAPHKGMDFSIKQILEFFPIDEERFPSIALARQVLQDKGSSGPFFNAANEILVQRFLKKEIAWCDILDKLTRLMKNHRVSSCTSLDDVFSVDKEARALAQEI.

NADPH is bound by residues Thr10, Gly11, Ser12, Val13, and Asn121. Position 122 (Lys122) interacts with 1-deoxy-D-xylulose 5-phosphate. Residue Glu123 coordinates NADPH. Residue Asp147 participates in Mn(2+) binding. 1-deoxy-D-xylulose 5-phosphate-binding residues include Ser148, Glu149, Ser173, and His196. Glu149 is a binding site for Mn(2+). Residue Gly202 coordinates NADPH. 1-deoxy-D-xylulose 5-phosphate is bound by residues Ser209, Asn214, Lys215, and Glu218. Glu218 is a Mn(2+) binding site.

The protein belongs to the DXR family. It depends on Mg(2+) as a cofactor. Mn(2+) serves as cofactor.

It carries out the reaction 2-C-methyl-D-erythritol 4-phosphate + NADP(+) = 1-deoxy-D-xylulose 5-phosphate + NADPH + H(+). It functions in the pathway isoprenoid biosynthesis; isopentenyl diphosphate biosynthesis via DXP pathway; isopentenyl diphosphate from 1-deoxy-D-xylulose 5-phosphate: step 1/6. In terms of biological role, catalyzes the NADPH-dependent rearrangement and reduction of 1-deoxy-D-xylulose-5-phosphate (DXP) to 2-C-methyl-D-erythritol 4-phosphate (MEP). The chain is 1-deoxy-D-xylulose 5-phosphate reductoisomerase from Chlamydia abortus (strain DSM 27085 / S26/3) (Chlamydophila abortus).